A 270-amino-acid polypeptide reads, in one-letter code: UPF0354 protein BA_4944/GBAA_4944/BAS4588 (270 aa).

It belongs to the UPF0354 family.

In Bacillus anthracis, this protein is UPF0354 protein BA_4944/GBAA_4944/BAS4588.